A 153-amino-acid chain; its full sequence is Small ribosomal subunit protein bS16 (153 aa).

Positions 121 to 131 (AEAAAKAKAEA) are enriched in basic and acidic residues. Residues 121–153 (AEAAAKAKAEAEAAAAAEEAPAEEAAEEAPAED) form a disordered region. Positions 140 to 153 (APAEEAAEEAPAED) are enriched in acidic residues.

It belongs to the bacterial ribosomal protein bS16 family.

The polypeptide is Small ribosomal subunit protein bS16 (Bifidobacterium longum (strain DJO10A)).